The following is a 114-amino-acid chain: Progonadoliberin-2 (114 aa).

A signal peptide spans 1–25 (MASSMLGFLLLLLLLMAAHPGPSEA). A disordered region spans residues 22 to 80 (PSEAQHWSHGWYPGGKRASNSPQDPQSALRPPAPSAAQTAHSFRSAALASPEDSVPWEG). A Glycine amide modification is found at glycine 35.

The protein belongs to the GnRH family. Midbrain.

It is found in the secreted. Stimulates the secretion of gonadotropins; it stimulates the secretion of both luteinizing and follicle-stimulating hormones. This Tupaia belangeri (Common tree shrew) protein is Progonadoliberin-2 (GNRH2).